We begin with the raw amino-acid sequence, 117 residues long: Photosystem II reaction center Psb28 protein (117 aa).

The protein belongs to the Psb28 family. Part of the photosystem II complex.

Its subcellular location is the cellular thylakoid membrane. This Prochlorococcus marinus (strain MIT 9215) protein is Photosystem II reaction center Psb28 protein.